A 677-amino-acid polypeptide reads, in one-letter code: Vertnin (677 aa).

2 disordered regions span residues 356 to 376 (GSTGELSPGDSTEQDYWSSPE) and 458 to 490 (HSGSSEEGSDADKSQSPRSQMSPSKFDRQKLSP). Basic and acidic residues predominate over residues 458–472 (HSGSSEEGSDADKSQ).

The protein belongs to the vertnin family.

It is found in the nucleus. In terms of biological role, functions as a transcriptional repressor that modulates bmp2b expression during dorsoventral patterning. The protein is Vertnin (vrtn) of Danio rerio (Zebrafish).